A 579-amino-acid polypeptide reads, in one-letter code: Cytochrome P450 monooxygenase ORF6 (579 aa).

N2 carries an N-linked (GlcNAc...) asparagine glycan. A helical transmembrane segment spans residues 7-29; the sequence is PLGSFVGTTLLLFILYKLVKLAY. N194 and N390 each carry an N-linked (GlcNAc...) asparagine glycan. C512 serves as a coordination point for heme.

This sequence belongs to the cytochrome P450 family. The cofactor is heme.

Its subcellular location is the membrane. Its pathway is sesquiterpene biosynthesis. Functionally, cytochrome P450 monooxygenase; part of the gene cluster that mediates the biosynthesis of PR-toxin, a bicyclic sesquiterpene belonging to the eremophilane class and acting as a mycotoxin. The first step of the pathway is catalyzed by the aristolochene synthase which performs the cyclization of trans,trans-farnesyl diphosphate (FPP) to the bicyclic sesquiterpene aristolochene. Following the formation of aristolochene, the non-oxygenated aristolochene is converted to the trioxygenated intermediate eremofortin B, via 7-epi-neopetasone. This conversion appears to involve three enzymes, a hydroxysterol oxidase-like enzyme, the quinone-oxidase prx3 that forms the quinone-type-structure in the bicyclic nucleus of aristolochene with the C8-oxo group and the C-3 hydroxyl group, and the P450 monooxygenase ORF6 that introduces the epoxide at the double bond between carbons 1 and 2. No monoxy or dioxy-intermediates have been reported to be released to the broth, so these three early oxidative reactions may be coupled together. Eremofortin B is further oxidized by another P450 monooxygenase, that introduces a second epoxide between carbons 7 and 11 prior to acetylation to eremofortin A by the acetyltransferase ORF8. The second epoxidation may be performed by a second P450 monooxygenase. After the acetylation step, eremofortin A is converted to eremofortin C and then to PR-toxin. First the conversion of eremofortin A to eremofortin C proceeds by oxidation of the side chain of the molecule at C-12 and is catalyzed by the short-chain oxidoreductase prx1. The cytochrome P450 monooxygenase ORF6 is probably also involved in this step. The primary alcohol formed at C-12 is finally oxidized by the short-chain alcohol dehydrogenase prx4 that forms PR-toxin. In Penicillium roqueforti (strain FM164), this protein is Cytochrome P450 monooxygenase ORF6.